Here is a 720-residue protein sequence, read N- to C-terminus: Photosystem I P700 chlorophyll a apoprotein A1 (720 aa).

Transmembrane regions (helical) follow at residues 61–84 (VFSA…FHGA), 147–170 (LYCT…FHYH), 186–210 (LNHH…HVSL), 282–300 (TAHH…GHMY), 337–360 (WHAQ…HHMY), 376–402 (LSLF…IFMV), 424–446 (AIVS…LYIH), and 522–540 (FLVH…LILL). 2 residues coordinate [4Fe-4S] cluster: C564 and C573. 2 consecutive transmembrane segments (helical) span residues 580-601 (HVFL…HFSW) and 655-677 (LSAY…MFLF). H666 lines the chlorophyll a' pocket. Residues M674 and Y682 each coordinate chlorophyll a. W683 contacts phylloquinone. Residues 715–720 (AVGVAH) form a helical membrane-spanning segment.

This sequence belongs to the PsaA/PsaB family. As to quaternary structure, the PsaA/B heterodimer binds the P700 chlorophyll special pair and subsequent electron acceptors. PSI consists of a core antenna complex that captures photons, and an electron transfer chain that converts photonic excitation into a charge separation. The eukaryotic PSI reaction center is composed of at least 11 subunits. P700 is a chlorophyll a/chlorophyll a' dimer, A0 is one or more chlorophyll a, A1 is one or both phylloquinones and FX is a shared 4Fe-4S iron-sulfur center. is required as a cofactor.

It is found in the plastid. The protein localises to the chloroplast thylakoid membrane. The enzyme catalyses reduced [plastocyanin] + hnu + oxidized [2Fe-2S]-[ferredoxin] = oxidized [plastocyanin] + reduced [2Fe-2S]-[ferredoxin]. Functionally, psaA and PsaB bind P700, the primary electron donor of photosystem I (PSI), as well as the electron acceptors A0, A1 and FX. PSI is a plastocyanin-ferredoxin oxidoreductase, converting photonic excitation into a charge separation, which transfers an electron from the donor P700 chlorophyll pair to the spectroscopically characterized acceptors A0, A1, FX, FA and FB in turn. Oxidized P700 is reduced on the lumenal side of the thylakoid membrane by plastocyanin. This is Photosystem I P700 chlorophyll a apoprotein A1 from Sequoia sempervirens (California redwood).